Here is a 367-residue protein sequence, read N- to C-terminus: Lipoyl synthase 2, chloroplastic (367 aa).

7 residues coordinate [4Fe-4S] cluster: Cys-84, Cys-89, Cys-95, Cys-121, Cys-125, Cys-128, and Ser-336. The Radical SAM core domain maps to 104 to 325 (GEGDGIATAT…KEYGESVGFR (222 aa)).

Belongs to the radical SAM superfamily. Lipoyl synthase family. It depends on [4Fe-4S] cluster as a cofactor.

The protein resides in the plastid. It localises to the chloroplast. The enzyme catalyses [[Fe-S] cluster scaffold protein carrying a second [4Fe-4S](2+) cluster] + N(6)-octanoyl-L-lysyl-[protein] + 2 oxidized [2Fe-2S]-[ferredoxin] + 2 S-adenosyl-L-methionine + 4 H(+) = [[Fe-S] cluster scaffold protein] + N(6)-[(R)-dihydrolipoyl]-L-lysyl-[protein] + 4 Fe(3+) + 2 hydrogen sulfide + 2 5'-deoxyadenosine + 2 L-methionine + 2 reduced [2Fe-2S]-[ferredoxin]. Its pathway is protein modification; protein lipoylation via endogenous pathway; protein N(6)-(lipoyl)lysine from octanoyl-[acyl-carrier-protein]: step 2/2. Functionally, catalyzes the radical-mediated insertion of two sulfur atoms into the C-6 and C-8 positions of the octanoyl moiety bound to the lipoyl domains of lipoate-dependent enzymes, thereby converting the octanoylated domains into lipoylated derivatives. The chain is Lipoyl synthase 2, chloroplastic from Zea mays (Maize).